A 157-amino-acid chain; its full sequence is Deoxyuridine 5'-triphosphate nucleotidohydrolase (157 aa).

Residues 73–75, Asn-86, and 90–92 contribute to the substrate site; these read RSG and TID.

The protein belongs to the dUTPase family. Mg(2+) serves as cofactor.

It carries out the reaction dUTP + H2O = dUMP + diphosphate + H(+). It functions in the pathway pyrimidine metabolism; dUMP biosynthesis; dUMP from dCTP (dUTP route): step 2/2. In terms of biological role, this enzyme is involved in nucleotide metabolism: it produces dUMP, the immediate precursor of thymidine nucleotides and it decreases the intracellular concentration of dUTP so that uracil cannot be incorporated into DNA. This chain is Deoxyuridine 5'-triphosphate nucleotidohydrolase, found in Azorhizobium caulinodans (strain ATCC 43989 / DSM 5975 / JCM 20966 / LMG 6465 / NBRC 14845 / NCIMB 13405 / ORS 571).